A 554-amino-acid polypeptide reads, in one-letter code: Oxygen-dependent choline dehydrogenase (554 aa).

Position 4 to 33 (4 to 33) interacts with FAD; it reads DYIIIGAGSAGNVLATRLTEDPNTTVLLLE. The Proton acceptor role is filled by H473.

It belongs to the GMC oxidoreductase family. Requires FAD as cofactor.

It carries out the reaction choline + A = betaine aldehyde + AH2. The catalysed reaction is betaine aldehyde + NAD(+) + H2O = glycine betaine + NADH + 2 H(+). The protein operates within amine and polyamine biosynthesis; betaine biosynthesis via choline pathway; betaine aldehyde from choline (cytochrome c reductase route): step 1/1. In terms of biological role, involved in the biosynthesis of the osmoprotectant glycine betaine. Catalyzes the oxidation of choline to betaine aldehyde and betaine aldehyde to glycine betaine at the same rate. The chain is Oxygen-dependent choline dehydrogenase from Klebsiella pneumoniae (strain 342).